The primary structure comprises 217 residues: 3,4-dihydroxy-2-butanone 4-phosphate synthase (217 aa).

Residues 37–38 (RE), D42, 150–154 (RGGHT), and E174 contribute to the D-ribulose 5-phosphate site. A Mg(2+)-binding site is contributed by E38. Mg(2+) is bound at residue H153.

It belongs to the DHBP synthase family. In terms of assembly, homodimer. Requires Mg(2+) as cofactor. Mn(2+) is required as a cofactor.

It carries out the reaction D-ribulose 5-phosphate = (2S)-2-hydroxy-3-oxobutyl phosphate + formate + H(+). It participates in cofactor biosynthesis; riboflavin biosynthesis; 2-hydroxy-3-oxobutyl phosphate from D-ribulose 5-phosphate: step 1/1. In terms of biological role, catalyzes the conversion of D-ribulose 5-phosphate to formate and 3,4-dihydroxy-2-butanone 4-phosphate. The sequence is that of 3,4-dihydroxy-2-butanone 4-phosphate synthase from Shigella boydii serotype 18 (strain CDC 3083-94 / BS512).